Consider the following 484-residue polypeptide: Glutamate--tRNA ligase (484 aa).

Residues 12–22 (PSPTGEPHVGT) carry the 'HIGH' region motif. Residues 253-257 (KLSKR) carry the 'KMSKS' region motif. An ATP-binding site is contributed by Lys256.

The protein belongs to the class-I aminoacyl-tRNA synthetase family. Glutamate--tRNA ligase type 1 subfamily. Monomer.

The protein localises to the cytoplasm. The enzyme catalyses tRNA(Glu) + L-glutamate + ATP = L-glutamyl-tRNA(Glu) + AMP + diphosphate. Its function is as follows. Catalyzes the attachment of glutamate to tRNA(Glu) in a two-step reaction: glutamate is first activated by ATP to form Glu-AMP and then transferred to the acceptor end of tRNA(Glu). The polypeptide is Glutamate--tRNA ligase (Rhizobium etli (strain CIAT 652)).